An 819-amino-acid chain; its full sequence is Putative U-box domain-containing protein 53 (819 aa).

2 disordered regions span residues 208–309 and 398–433; these read TSDT…NPQF and KETE…KEKL. Residues 223 to 237 show a composition bias toward low complexity; that stretch reads ERTSSSCSSGSGANS. The span at 238-260 shows a compositional bias: polar residues; it reads DVMSNALKSNPHTLSNKRMQNLP. Over residues 278–296 the composition is skewed to basic and acidic residues; it reads DETKKRSSDAAEEASKRSS. Residues 297–307 show a composition bias toward polar residues; it reads PETSRSVSWNP. Residues 395–437 are a coiled coil; that stretch reads IAKKETEKFEQKRREEREAAQRREAEMKATHEAKEKEKLEESS. A Protein kinase domain is found at 460 to 728; sequence FSEDLKIGMG…DLEDQILPVL (269 aa). ATP is bound by residues 466-474 and Lys487; that span reads IGMGAYGDV. Residue Asp582 is the Proton acceptor of the active site. The 72-residue stretch at 748–819 folds into the U-box domain; the sequence is QPPSHFFCPL…AIVEWRNRNQ (72 aa).

Belongs to the protein kinase superfamily. Ser/Thr protein kinase family.

It catalyses the reaction L-seryl-[protein] + ATP = O-phospho-L-seryl-[protein] + ADP + H(+). The catalysed reaction is L-threonyl-[protein] + ATP = O-phospho-L-threonyl-[protein] + ADP + H(+). The enzyme catalyses S-ubiquitinyl-[E2 ubiquitin-conjugating enzyme]-L-cysteine + [acceptor protein]-L-lysine = [E2 ubiquitin-conjugating enzyme]-L-cysteine + N(6)-ubiquitinyl-[acceptor protein]-L-lysine.. It functions in the pathway protein modification; protein ubiquitination. Functions as an E3 ubiquitin ligase. The protein is Putative U-box domain-containing protein 53 (PUB53) of Arabidopsis thaliana (Mouse-ear cress).